The primary structure comprises 127 residues: Small ribosomal subunit protein eS8 (127 aa).

Residues 1-25 (MTIFQGKSGKKPTGGNLKQAKKKRR) are disordered.

This sequence belongs to the eukaryotic ribosomal protein eS8 family. Part of the 30S ribosomal subunit.

The sequence is that of Small ribosomal subunit protein eS8 from Thermoplasma volcanium (strain ATCC 51530 / DSM 4299 / JCM 9571 / NBRC 15438 / GSS1).